The sequence spans 251 residues: 5-oxoprolinase subunit A 3 (251 aa).

Belongs to the LamB/PxpA family. In terms of assembly, forms a complex composed of PxpA, PxpB and PxpC.

The catalysed reaction is 5-oxo-L-proline + ATP + 2 H2O = L-glutamate + ADP + phosphate + H(+). Catalyzes the cleavage of 5-oxoproline to form L-glutamate coupled to the hydrolysis of ATP to ADP and inorganic phosphate. This chain is 5-oxoprolinase subunit A 3, found in Pseudomonas aeruginosa (strain ATCC 15692 / DSM 22644 / CIP 104116 / JCM 14847 / LMG 12228 / 1C / PRS 101 / PAO1).